We begin with the raw amino-acid sequence, 451 residues long: 3-phosphoshikimate 1-carboxyvinyltransferase (451 aa).

3-phosphoshikimate-binding residues include Lys30, Ser31, and Arg35. A phosphoenolpyruvate-binding site is contributed by Lys30. Residues Gly103 and Arg131 each coordinate phosphoenolpyruvate. The 3-phosphoshikimate site is built by Ser176, Gln178, Asp329, and Lys356. Gln178 is a binding site for phosphoenolpyruvate. The active-site Proton acceptor is Asp329. Residues Arg360 and Arg404 each contribute to the phosphoenolpyruvate site.

It belongs to the EPSP synthase family. Monomer.

The protein resides in the cytoplasm. It catalyses the reaction 3-phosphoshikimate + phosphoenolpyruvate = 5-O-(1-carboxyvinyl)-3-phosphoshikimate + phosphate. It functions in the pathway metabolic intermediate biosynthesis; chorismate biosynthesis; chorismate from D-erythrose 4-phosphate and phosphoenolpyruvate: step 6/7. Its function is as follows. Catalyzes the transfer of the enolpyruvyl moiety of phosphoenolpyruvate (PEP) to the 5-hydroxyl of shikimate-3-phosphate (S3P) to produce enolpyruvyl shikimate-3-phosphate and inorganic phosphate. The polypeptide is 3-phosphoshikimate 1-carboxyvinyltransferase (Parvibaculum lavamentivorans (strain DS-1 / DSM 13023 / NCIMB 13966)).